Reading from the N-terminus, the 383-residue chain is L-lactate dehydrogenase (383 aa).

An FMN hydroxy acid dehydrogenase domain is found at 1–380 (MIISSGNDYR…NTDCLVQAIK (380 aa)). Residue tyrosine 24 coordinates substrate. FMN is bound by residues serine 106 and glutamine 127. Residue tyrosine 129 coordinates substrate. Threonine 155 serves as a coordination point for FMN. Arginine 164 is a binding site for substrate. Residue lysine 251 participates in FMN binding. The Proton acceptor role is filled by histidine 275. Arginine 278 serves as a coordination point for substrate. 306–330 (DSGIRNGLDVVRMLALGADTVLLGR) lines the FMN pocket.

It belongs to the FMN-dependent alpha-hydroxy acid dehydrogenase family. FMN is required as a cofactor.

It is found in the cell inner membrane. The catalysed reaction is (S)-lactate + A = pyruvate + AH2. In terms of biological role, catalyzes the conversion of L-lactate to pyruvate. Is coupled to the respiratory chain. This chain is L-lactate dehydrogenase, found in Acinetobacter baumannii (strain SDF).